A 217-amino-acid polypeptide reads, in one-letter code: Octanoyltransferase (217 aa).

In terms of domain architecture, BPL/LPL catalytic spans 32–207 (DDSADEIWLV…HMIKKLNATQ (176 aa)). Substrate-binding positions include 71–78 (RGGQVTYH), 138–140 (SLG), and 151–153 (GLA). The active-site Acyl-thioester intermediate is cysteine 169.

This sequence belongs to the LipB family.

Its subcellular location is the cytoplasm. The catalysed reaction is octanoyl-[ACP] + L-lysyl-[protein] = N(6)-octanoyl-L-lysyl-[protein] + holo-[ACP] + H(+). It functions in the pathway protein modification; protein lipoylation via endogenous pathway; protein N(6)-(lipoyl)lysine from octanoyl-[acyl-carrier-protein]: step 1/2. In terms of biological role, catalyzes the transfer of endogenously produced octanoic acid from octanoyl-acyl-carrier-protein onto the lipoyl domains of lipoate-dependent enzymes. Lipoyl-ACP can also act as a substrate although octanoyl-ACP is likely to be the physiological substrate. The protein is Octanoyltransferase of Pseudoalteromonas translucida (strain TAC 125).